The primary structure comprises 684 residues: DNA-directed RNA polymerase subunit beta' (684 aa).

4 residues coordinate Zn(2+): Cys-69, Cys-71, Cys-87, and Cys-90. Mg(2+)-binding residues include Asp-489, Asp-491, and Asp-493.

It belongs to the RNA polymerase beta' chain family. RpoC1 subfamily. As to quaternary structure, in plastids the minimal PEP RNA polymerase catalytic core is composed of four subunits: alpha, beta, beta', and beta''. When a (nuclear-encoded) sigma factor is associated with the core the holoenzyme is formed, which can initiate transcription. Requires Mg(2+) as cofactor. It depends on Zn(2+) as a cofactor.

It is found in the plastid. Its subcellular location is the chloroplast. The enzyme catalyses RNA(n) + a ribonucleoside 5'-triphosphate = RNA(n+1) + diphosphate. DNA-dependent RNA polymerase catalyzes the transcription of DNA into RNA using the four ribonucleoside triphosphates as substrates. The protein is DNA-directed RNA polymerase subunit beta' of Morus indica (Mulberry).